Consider the following 448-residue polypeptide: Antilisterial bacteriocin subtilosin biosynthesis protein AlbA (448 aa).

Residues 115-329 (FPMPLHATFE…EQHVIDEFKD (215 aa)) form the Radical SAM core domain. The [4Fe-4S] cluster site is built by Cys129, Cys133, Cys136, Cys408, Cys414, and Cys417.

Requires [4Fe-4S] cluster as cofactor.

It localises to the cytoplasm. Catalyzes the formation of 3 thioether bonds during production of the sactipeptide subtilosin from SboA. In vitro the thioether bonds cannot be made in the absence of the SboA propeptide, suggesting this is the first reaction in subtilosin maturation. In vitro, in the absence of a second substrate, cleaves S-adenosyl-L-methionine into Met and 5'-dA. This chain is Antilisterial bacteriocin subtilosin biosynthesis protein AlbA (albA), found in Bacillus subtilis (strain 168).